The primary structure comprises 262 residues: Ribosomal RNA small subunit methyltransferase A (262 aa).

S-adenosyl-L-methionine is bound by residues Ile18, Gly43, Glu65, Asp91, and Asn110.

Belongs to the class I-like SAM-binding methyltransferase superfamily. rRNA adenine N(6)-methyltransferase family. RsmA subfamily.

The protein resides in the cytoplasm. It catalyses the reaction adenosine(1518)/adenosine(1519) in 16S rRNA + 4 S-adenosyl-L-methionine = N(6)-dimethyladenosine(1518)/N(6)-dimethyladenosine(1519) in 16S rRNA + 4 S-adenosyl-L-homocysteine + 4 H(+). In terms of biological role, specifically dimethylates two adjacent adenosines (A1518 and A1519) in the loop of a conserved hairpin near the 3'-end of 16S rRNA in the 30S particle. May play a critical role in biogenesis of 30S subunits. The polypeptide is Ribosomal RNA small subunit methyltransferase A (Ehrlichia canis (strain Jake)).